A 102-amino-acid chain; its full sequence is MANKKIRIRLKAYEHRTLDTAAEKIVETATRTGAKVAGPVPLPTERSLYTIIRATHKYKDSREQFEMRTHKRLVDIINPTQKTVDALMKLDLPSGVNVEIKL.

It belongs to the universal ribosomal protein uS10 family. As to quaternary structure, part of the 30S ribosomal subunit.

Involved in the binding of tRNA to the ribosomes. This Streptococcus pyogenes serotype M12 (strain MGAS2096) protein is Small ribosomal subunit protein uS10.